Consider the following 101-residue polypeptide: Large ribosomal subunit protein uL23 (101 aa).

It belongs to the universal ribosomal protein uL23 family. Part of the 50S ribosomal subunit. Contacts protein L29, and trigger factor when it is bound to the ribosome.

Its function is as follows. One of the early assembly proteins it binds 23S rRNA. One of the proteins that surrounds the polypeptide exit tunnel on the outside of the ribosome. Forms the main docking site for trigger factor binding to the ribosome. The protein is Large ribosomal subunit protein uL23 of Corynebacterium kroppenstedtii (strain DSM 44385 / JCM 11950 / CIP 105744 / CCUG 35717).